Here is a 325-residue protein sequence, read N- to C-terminus: Peroxidase 1 (325 aa).

The N-terminal stretch at 1-21 (MAIKNILALVVLLSVVGVSVA) is a signal peptide. 4 disulfide bridges follow: cysteine 35-cysteine 113, cysteine 68-cysteine 73, cysteine 119-cysteine 321, and cysteine 198-cysteine 230. Histidine 66 functions as the Proton acceptor in the catalytic mechanism. Ca(2+) contacts are provided by aspartate 67, valine 70, glycine 72, aspartate 74, and serine 76. Proline 161 contacts substrate. Residue histidine 191 coordinates heme b. Position 192 (threonine 192) interacts with Ca(2+). Residue asparagine 207 is glycosylated (N-linked (GlcNAc...) asparagine). The Ca(2+) site is built by aspartate 242, serine 245, and aspartate 250.

Belongs to the peroxidase family. Classical plant (class III) peroxidase subfamily. It depends on heme b as a cofactor. Ca(2+) serves as cofactor. In terms of tissue distribution, slightly expressed in roots.

Its subcellular location is the secreted. It carries out the reaction 2 a phenolic donor + H2O2 = 2 a phenolic radical donor + 2 H2O. In terms of biological role, removal of H(2)O(2), oxidation of toxic reductants, biosynthesis and degradation of lignin, suberization, auxin catabolism, response to environmental stresses such as wounding, pathogen attack and oxidative stress. These functions might be dependent on each isozyme/isoform in each plant tissue. The sequence is that of Peroxidase 1 (PER1) from Arabidopsis thaliana (Mouse-ear cress).